The sequence spans 472 residues: 2-methylcitrate synthase, mitochondrial (472 aa).

The N-terminal 29 residues, 1–29 (MALNLTSSRRALGSLKPLTRAAFSGVRGY), are a transit peptide targeting the mitochondrion. Positions 75 and 193 each coordinate CoA. Residue His271 coordinates oxaloacetate. A CoA-binding site is contributed by Leu306. The active site involves His307. CoA is bound by residues Val348, Gly350, and Tyr351. Residues His353 and Arg362 each contribute to the oxaloacetate site. His353 is a catalytic residue. Residues Thr402, Lys403, and Asn408 each contribute to the CoA site. The active site involves Asp410. Oxaloacetate-binding residues include Arg436 and Arg456.

Belongs to the citrate synthase family. Homodimer.

The protein localises to the mitochondrion matrix. The enzyme catalyses propanoyl-CoA + oxaloacetate + H2O = (2S,3S)-2-methylcitrate + CoA + H(+). It carries out the reaction oxaloacetate + acetyl-CoA + H2O = citrate + CoA + H(+). Its pathway is organic acid metabolism; propanoate degradation. In terms of biological role, component of the methylcitrate cycle that catalyzes the synthesis of (2S,3S)-2-methylcitrate from propionyl-CoA and oxaloacetate. Plays an important role in detoxification of propionyl-CoA, an inhibitor of both primary and secondary metabolism. Also has citrate synthase activity using as substrates acetyl-CoA and oxaloacetate. The polypeptide is 2-methylcitrate synthase, mitochondrial (Gibberella moniliformis (Maize ear and stalk rot fungus)).